Reading from the N-terminus, the 377-residue chain is ATP synthase gamma chain, chloroplastic (377 aa).

A chloroplast-targeting transit peptide spans 1-55; that stretch reads MSCSNLTMLVSSKPSLSDSSALSFRSSVSPFQLPNHNTSGPSNPSRSSSVTPVHC. Residues 30–52 form a disordered region; sequence PFQLPNHNTSGPSNPSRSSSVTP. Low complexity predominate over residues 37-52; it reads NTSGPSNPSRSSSVTP. Cys-143 is a catalytic residue. Cys-253 and Cys-259 are disulfide-bonded.

This sequence belongs to the ATPase gamma chain family. As to quaternary structure, F-type ATPases have 2 components, CF(1) - the catalytic core - and CF(0) - the membrane proton channel. CF(1) has five subunits: alpha(3), beta(3), gamma(1), delta(1), epsilon(1). CF(0) has four main subunits: a, b, b' and c.

It localises to the plastid. Its subcellular location is the chloroplast thylakoid membrane. Functionally, produces ATP from ADP in the presence of a proton gradient across the membrane. The gamma chain is believed to be important in regulating ATPase activity and the flow of protons through the CF(0) complex. This Nicotiana tabacum (Common tobacco) protein is ATP synthase gamma chain, chloroplastic (ATPC).